A 306-amino-acid chain; its full sequence is Curved DNA-binding protein (306 aa).

Residues 5–69 (DYYAIMGVKP…QRRAEYDQLW (65 aa)) enclose the J domain.

It localises to the cytoplasm. It is found in the nucleoid. DNA-binding protein that preferentially recognizes a curved DNA sequence. It is probably a functional analog of DnaJ; displays overlapping activities with DnaJ, but functions under different conditions, probably acting as a molecular chaperone in an adaptive response to environmental stresses other than heat shock. Lacks autonomous chaperone activity; binds native substrates and targets them for recognition by DnaK. Its activity is inhibited by the binding of CbpM. The protein is Curved DNA-binding protein of Salmonella choleraesuis (strain SC-B67).